Consider the following 803-residue polypeptide: Protein AMEIOTIC 1 homolog (803 aa).

2 disordered regions span residues 21–64 (RPQV…QSLS) and 264–333 (RLRQ…RWSA). A compositionally biased stretch (basic and acidic residues) spans 39–50 (NGKDDANHDESK). Over residues 51–64 (NQSPGLPLSRQSLS) the composition is skewed to polar residues. Basic and acidic residues predominate over residues 283–295 (KREEAESSMDKSR). Over residues 296–313 (AARKKKAKTYKSPKKVEK) the composition is skewed to basic residues. Basic and acidic residues predominate over residues 314 to 333 (RRVVEAKDGDPRRGKDRWSA). Positions 450-567 (VKKKVEELAE…SSFLSLKEQL (118 aa)) form a coiled coil. The tract at residues 651 to 688 (ISGGGSSSCPVASGPEQLPRSSSCPSIGPGGLPPSSRA) is disordered.

The protein resides in the nucleus. The protein localises to the chromosome. Its function is as follows. Plays a fundamental role in building the proper chromosome structure at the beginning of meiosis in male meiocytes. Required for the transition from leptotene to zygotene in meiocytes. Required for homologous chromosome pairing. In Oryza sativa subsp. japonica (Rice), this protein is Protein AMEIOTIC 1 homolog.